A 130-amino-acid polypeptide reads, in one-letter code: Small ribosomal subunit protein uS11 (130 aa).

This sequence belongs to the universal ribosomal protein uS11 family. In terms of assembly, part of the 30S ribosomal subunit. Interacts with proteins S7 and S18. Binds to IF-3.

Located on the platform of the 30S subunit, it bridges several disparate RNA helices of the 16S rRNA. Forms part of the Shine-Dalgarno cleft in the 70S ribosome. In Syntrophobacter fumaroxidans (strain DSM 10017 / MPOB), this protein is Small ribosomal subunit protein uS11.